Reading from the N-terminus, the 262-residue chain is tRNA pseudouridine synthase A (262 aa).

The active-site Nucleophile is the Asp-51. A substrate-binding site is contributed by Tyr-106.

It belongs to the tRNA pseudouridine synthase TruA family.

It carries out the reaction uridine(38/39/40) in tRNA = pseudouridine(38/39/40) in tRNA. In terms of biological role, formation of pseudouridine at positions 38, 39 and 40 in the anticodon stem and loop of transfer RNAs. The chain is tRNA pseudouridine synthase A from Pyrococcus horikoshii (strain ATCC 700860 / DSM 12428 / JCM 9974 / NBRC 100139 / OT-3).